Here is a 223-residue protein sequence, read N- to C-terminus: Phosphoribosylformylglycinamidine synthase subunit PurQ (223 aa).

A Glutamine amidotransferase type-1 domain is found at 4–223 (FAVVVFPGTN…FRSMVEWARK (220 aa)). The active-site Nucleophile is Cys-85. Residues His-196 and Glu-198 contribute to the active site.

Part of the FGAM synthase complex composed of 1 PurL, 1 PurQ and 2 PurS subunits.

Its subcellular location is the cytoplasm. It catalyses the reaction N(2)-formyl-N(1)-(5-phospho-beta-D-ribosyl)glycinamide + L-glutamine + ATP + H2O = 2-formamido-N(1)-(5-O-phospho-beta-D-ribosyl)acetamidine + L-glutamate + ADP + phosphate + H(+). It carries out the reaction L-glutamine + H2O = L-glutamate + NH4(+). The protein operates within purine metabolism; IMP biosynthesis via de novo pathway; 5-amino-1-(5-phospho-D-ribosyl)imidazole from N(2)-formyl-N(1)-(5-phospho-D-ribosyl)glycinamide: step 1/2. Its function is as follows. Part of the phosphoribosylformylglycinamidine synthase complex involved in the purines biosynthetic pathway. Catalyzes the ATP-dependent conversion of formylglycinamide ribonucleotide (FGAR) and glutamine to yield formylglycinamidine ribonucleotide (FGAM) and glutamate. The FGAM synthase complex is composed of three subunits. PurQ produces an ammonia molecule by converting glutamine to glutamate. PurL transfers the ammonia molecule to FGAR to form FGAM in an ATP-dependent manner. PurS interacts with PurQ and PurL and is thought to assist in the transfer of the ammonia molecule from PurQ to PurL. In Thermococcus kodakarensis (strain ATCC BAA-918 / JCM 12380 / KOD1) (Pyrococcus kodakaraensis (strain KOD1)), this protein is Phosphoribosylformylglycinamidine synthase subunit PurQ.